The sequence spans 930 residues: RNA-binding protein 10 (930 aa).

Composition is skewed to basic and acidic residues over residues Met1 to Gly14 and Arg21 to Pro45. A disordered region spans residues Met1–Ala127. Glu2 bears the N-acetylserine mark. Residues Arg30, Ser61, and Ser89 each carry the phosphoserine modification. The segment covering Asp59–Tyr70 has biased composition (acidic residues). The segment covering Arg80–Ser89 has biased composition (basic residues). Residues Arg98 to Gln111 are compositionally biased toward basic and acidic residues. Over residues Gly112 to Glu125 the composition is skewed to acidic residues. The 81-residue stretch at Asn129–Pro209 folds into the RRM 1 domain. The RanBP2-type zinc finger occupies Lys212–Glu242. An RRM 2 domain is found at Asp300 to Gly384. Lys383 carries the post-translational modification N6-acetyllysine. Disordered stretches follow at residues Pro466 to Ser524, Ser537 to Val569, Glu620 to Arg685, and Lys700 to Leu753. Residues Tyr508–Ser524 are compositionally biased toward polar residues. A compositionally biased stretch (low complexity) spans Ser541–Ala557. Basic and acidic residues-rich tracts occupy residues Ala623 to Lys639, Lys653 to Phe669, and Lys700 to Thr709. Phosphoserine is present on residues Ser718, Ser723, Ser733, Ser736, and Ser738. Positions Glu743–Leu753 are enriched in basic and acidic residues. Residues Leu759 to His784 form a C2H2-type; atypical zinc finger. Ser781 and Ser797 each carry phosphoserine. The span at Arg815 to Gly826 shows a compositional bias: basic and acidic residues. Residues Arg815 to Ile861 form a disordered region. Ser845 is subject to Phosphoserine. Residues Ser858–Ser904 form the G-patch domain. An Omega-N-methylarginine modification is found at Arg902.

In terms of assembly, associates with the spliceosome. Component of a large chromatin remodeling complex, at least composed of MYSM1, PCAF, RBM10 and KIF11/TRIP5.

It is found in the nucleus. Functionally, binds to ssRNA containing the consensus sequence 5'-AGGUAA-3'. May be involved in post-transcriptional processing, most probably in mRNA splicing. Binds to RNA homopolymers, with a preference for poly(G) and poly(U) and little for poly(A). May bind to specific miRNA hairpins. This Homo sapiens (Human) protein is RNA-binding protein 10.